Consider the following 426-residue polypeptide: Histidine--tRNA ligase (426 aa).

Belongs to the class-II aminoacyl-tRNA synthetase family. In terms of assembly, homodimer.

The protein localises to the cytoplasm. The catalysed reaction is tRNA(His) + L-histidine + ATP = L-histidyl-tRNA(His) + AMP + diphosphate + H(+). The sequence is that of Histidine--tRNA ligase from Prochlorococcus marinus (strain AS9601).